A 64-amino-acid polypeptide reads, in one-letter code: Purotoxin-2 (64 aa).

The tract at residues 1–44 is knottin domain; the sequence is AKACTPLLHDCSHDRHSCCRGDMFKYVCDCFYPEGEDKTEVCSC. 4 cysteine pairs are disulfide-bonded: C4/C19, C11/C28, C18/C44, and C30/C42. Residues 45 to 64 are linear cationic cytotoxin domain; that stretch reads QQPKSHKIAEKIIDKAKTTL. L64 carries the leucine amide modification.

The protein belongs to the neurotoxin 19 (CSTX) family. 05 (U4-Lctx) subfamily. In terms of processing, amidation at Leu-64 is not mandatory for activity on P2RX3. Expressed by the venom gland.

The protein localises to the secreted. In terms of biological role, enhances the high-affinity desensitization of human P2RX3 purinoceptors. At 50 nM, the toxin decreases the IC(50) for ambient ATP from 2.67 nM to 0.77 nM in human P2RX3. The polypeptide is Purotoxin-2 (Alopecosa marikovskyi (Wolf spider)).